The primary structure comprises 138 residues: ATP synthase epsilon chain (138 aa).

This sequence belongs to the ATPase epsilon chain family. F-type ATPases have 2 components, CF(1) - the catalytic core - and CF(0) - the membrane proton channel. CF(1) has five subunits: alpha(3), beta(3), gamma(1), delta(1), epsilon(1). CF(0) has three main subunits: a, b and c.

It localises to the cell membrane. Produces ATP from ADP in the presence of a proton gradient across the membrane. This Streptococcus uberis (strain ATCC BAA-854 / 0140J) protein is ATP synthase epsilon chain.